We begin with the raw amino-acid sequence, 436 residues long: UPF0597 protein YhaM (436 aa).

It belongs to the UPF0597 family.

This Shigella sonnei (strain Ss046) protein is UPF0597 protein YhaM.